We begin with the raw amino-acid sequence, 164 residues long: Ribosome maturation factor RimM (164 aa).

The 72-residue stretch at 90-161 folds into the PRC barrel domain; that stretch reads KGSYFIADLI…TVTIKPLEIW (72 aa).

The protein belongs to the RimM family. As to quaternary structure, binds ribosomal protein uS19.

Its subcellular location is the cytoplasm. Functionally, an accessory protein needed during the final step in the assembly of 30S ribosomal subunit, possibly for assembly of the head region. Essential for efficient processing of 16S rRNA. May be needed both before and after RbfA during the maturation of 16S rRNA. It has affinity for free ribosomal 30S subunits but not for 70S ribosomes. This Clostridium botulinum (strain Langeland / NCTC 10281 / Type F) protein is Ribosome maturation factor RimM.